A 149-amino-acid chain; its full sequence is Large ribosomal subunit protein bL9 (149 aa).

This sequence belongs to the bacterial ribosomal protein bL9 family.

Binds to the 23S rRNA. The polypeptide is Large ribosomal subunit protein bL9 (Chromobacterium violaceum (strain ATCC 12472 / DSM 30191 / JCM 1249 / CCUG 213 / NBRC 12614 / NCIMB 9131 / NCTC 9757 / MK)).